A 299-amino-acid chain; its full sequence is Tyrosine recombinase XerC (299 aa).

Positions 1–81 constitute a Core-binding (CB) domain; that stretch reads MDEAIRRFIE…SWRQFYHWLQ (81 aa). Positions 102 to 281 constitute a Tyr recombinase domain; that stretch reads LLPKALPVDG…DFQHLAKVYD (180 aa). Residues arginine 142, lysine 166, histidine 233, arginine 236, and histidine 259 contribute to the active site. The active-site O-(3'-phospho-DNA)-tyrosine intermediate is the tyrosine 268.

The protein belongs to the 'phage' integrase family. XerC subfamily. Forms a cyclic heterotetrameric complex composed of two molecules of XerC and two molecules of XerD.

It is found in the cytoplasm. Site-specific tyrosine recombinase, which acts by catalyzing the cutting and rejoining of the recombining DNA molecules. The XerC-XerD complex is essential to convert dimers of the bacterial chromosome into monomers to permit their segregation at cell division. It also contributes to the segregational stability of plasmids. The chain is Tyrosine recombinase XerC from Chromobacterium violaceum (strain ATCC 12472 / DSM 30191 / JCM 1249 / CCUG 213 / NBRC 12614 / NCIMB 9131 / NCTC 9757 / MK).